A 1133-amino-acid chain; its full sequence is DNA-directed RNA polymerase subunit beta (1133 aa).

The interval Ala-1085–Phe-1133 is disordered. Residues Arg-1090–Asp-1105 are compositionally biased toward polar residues. The segment covering Glu-1123–Phe-1133 has biased composition (acidic residues).

It belongs to the RNA polymerase beta chain family. In cyanobacteria the RNAP catalytic core is composed of 2 alpha, 1 beta, 1 beta', 1 gamma and 1 omega subunit. When a sigma factor is associated with the core the holoenzyme is formed, which can initiate transcription.

It catalyses the reaction RNA(n) + a ribonucleoside 5'-triphosphate = RNA(n+1) + diphosphate. DNA-dependent RNA polymerase catalyzes the transcription of DNA into RNA using the four ribonucleoside triphosphates as substrates. This chain is DNA-directed RNA polymerase subunit beta, found in Synechococcus sp. (strain JA-3-3Ab) (Cyanobacteria bacterium Yellowstone A-Prime).